Here is a 112-residue protein sequence, read N- to C-terminus: Nucleoid-associated protein lpg2755 (112 aa).

The protein belongs to the YbaB/EbfC family. As to quaternary structure, homodimer.

Its subcellular location is the cytoplasm. It localises to the nucleoid. In terms of biological role, binds to DNA and alters its conformation. May be involved in regulation of gene expression, nucleoid organization and DNA protection. The protein is Nucleoid-associated protein lpg2755 of Legionella pneumophila subsp. pneumophila (strain Philadelphia 1 / ATCC 33152 / DSM 7513).